A 106-amino-acid chain; its full sequence is NADH dehydrogenase [ubiquinone] 1 alpha subcomplex subunit 8-B (106 aa).

Residue Ser-2 is modified to N-acetylserine. CHCH domains follow at residues 26-67 and 68-106; these read GMRC…LKDL and HQKCQKEMDDYVGCMYYYTNEFDLCRKEQEAFEKVCPLK. 3 short sequence motifs (cx9C motif) span residues 29–39, 49–59, and 71–81; these read CMPENVAFLKC, CLDKGRDVTRC, and CQKEMDDYVGC. 4 disulfides stabilise this stretch: Cys-29–Cys-59, Cys-39–Cys-49, Cys-71–Cys-103, and Cys-81–Cys-92. A Cx10C motif motif is present at residues 92–103; that stretch reads CRKEQEAFEKVC.

It belongs to the complex I NDUFA8 subunit family. Complex I is composed of at least 49 different subunits.

It localises to the mitochondrion. It is found in the mitochondrion intermembrane space. Accessory subunit of the mitochondrial membrane respiratory chain NADH dehydrogenase (Complex I), that is believed not to be involved in catalysis. Complex I functions in the transfer of electrons from NADH to the respiratory chain. The immediate electron acceptor for the enzyme is believed to be ubiquinone. The protein is NADH dehydrogenase [ubiquinone] 1 alpha subcomplex subunit 8-B of Arabidopsis thaliana (Mouse-ear cress).